We begin with the raw amino-acid sequence, 154 residues long: Ribosome maturation factor RimP (154 aa).

Belongs to the RimP family.

Its subcellular location is the cytoplasm. Required for maturation of 30S ribosomal subunits. This Heliobacterium modesticaldum (strain ATCC 51547 / Ice1) protein is Ribosome maturation factor RimP.